The primary structure comprises 87 residues: Protein moa-2 (87 aa).

The tract at residues 23-87 (GTAMRHEPSR…VWTASREESS (65 aa)) is disordered. 2 stretches are compositionally biased toward basic and acidic residues: residues 26–39 (MRHEPSRMDCESAP) and 50–63 (RNEHVYCRCGEREP).

The polypeptide is Protein moa-2 (Caenorhabditis elegans).